A 219-amino-acid polypeptide reads, in one-letter code: 2-C-methyl-D-erythritol 4-phosphate cytidylyltransferase (219 aa).

It belongs to the IspD/TarI cytidylyltransferase family. IspD subfamily.

It carries out the reaction 2-C-methyl-D-erythritol 4-phosphate + CTP + H(+) = 4-CDP-2-C-methyl-D-erythritol + diphosphate. The protein operates within isoprenoid biosynthesis; isopentenyl diphosphate biosynthesis via DXP pathway; isopentenyl diphosphate from 1-deoxy-D-xylulose 5-phosphate: step 2/6. Its function is as follows. Catalyzes the formation of 4-diphosphocytidyl-2-C-methyl-D-erythritol from CTP and 2-C-methyl-D-erythritol 4-phosphate (MEP). The chain is 2-C-methyl-D-erythritol 4-phosphate cytidylyltransferase from Chlamydia trachomatis serovar D (strain ATCC VR-885 / DSM 19411 / UW-3/Cx).